The sequence spans 382 residues: WD repeat-containing protein 55 (382 aa).

A compositionally biased stretch (basic and acidic residues) spans 1–11 (MDRMCEERAAE). Positions 1–31 (MDRMCEERAAEDGSDEEDPDATEAPARIRDT) are disordered. The span at 12 to 21 (DGSDEEDPDA) shows a compositional bias: acidic residues. At S14 the chain carries Phosphoserine. WD repeat units lie at residues 36–75 (VLEAPASGLAFHPARDLLAAGDVDGDVFVFSYSCQEGETK), 82–121 (HHLKSCRAVVFSEDGQKLVTVSKDKAIHFLDVELGRLERR), 125–163 (AHGAPINSLLLVDENVLATGDDTGGIRLWDQRKEGPLMD), 166–205 (QHEEYIADMALDPDKKLLLTASGDGCLGVFNIKRRRFELL), 208–247 (PQSGDLTSVTLMKYGRKVACGSSEGTIYLFNWDGFGATSD), 250–289 (ALRAESIDCMVPVTESLLCAGSTDGVIRAVNILPNRVVGS), and 293–332 (HAEEPVENLALSHCGCFLASSGHDQRLKFWDMAQLRALVV). Phosphoserine is present on residues S354 and S381.

Belongs to the WD repeat WDR55 family.

It localises to the nucleus. The protein localises to the nucleolus. It is found in the cytoplasm. Functionally, nucleolar protein that acts as a modulator of rRNA synthesis. Plays a central role during organogenesis. This Bos taurus (Bovine) protein is WD repeat-containing protein 55 (WDR55).